A 926-amino-acid polypeptide reads, in one-letter code: Vacuolar protein sorting-associated protein 39 homolog (926 aa).

In terms of domain architecture, CNH spans 15-306 (PVEVTCLAFQ…MTLCSGARGQ (292 aa)). A CHCR repeat occupies 590–768 (DETEMARNLN…LFRTLVHPNQ (179 aa)).

Belongs to the VAM6/VPS39 family. As to quaternary structure, probable core component of the homotypic fusion and vacuole protein sorting (HOPS) complex consisting of the core class C Vps proteins vps-11, vps-16, vps-18, and which further associates with vps-33.1, vps-39 and vps-41. May interact with lgg-2. Interacts with cuti-1.

The protein resides in the cytoplasm. It localises to the lysosome membrane. Its subcellular location is the late endosome membrane. It is found in the late endosome. The protein localises to the lysosome. Functionally, plays a role in vesicle-mediated protein trafficking to lysosomal compartments including the endocytic membrane transport and autophagic pathways. Believed to act in part as a component of the putative HOPS endosomal tethering complex which is proposed to be involved in the rab-5-to-rab-7 endosome conversion probably implicating sand-1, and via binding SNAREs and SNARE complexes to mediate tethering and docking events during SNARE-mediated membrane fusion. The HOPS complex is proposed to be recruited to rab-7 on the late endosomal membrane and to regulate late endocytic, phagocytic and autophagic traffic towards lysosomes. Involved in homotypic vesicle fusions between late endosomes and in heterotypic fusions between late endosomes and lysosomes. Required for fusion of endosomes. In association with lgg-2 mediates the tethering of autophagosomes with lysosomes to form autolysosomes. Within the HOPS complex, contributes to the normal development of gut granules in embryonic and adult intestinal cells. In Caenorhabditis elegans, this protein is Vacuolar protein sorting-associated protein 39 homolog.